Reading from the N-terminus, the 123-residue chain is Guanine nucleotide exchange factor MSS4 (123 aa).

M1 carries the post-translational modification N-acetylmethionine. Positions 9–123 (ELVSAEGRNR…YVALERVSHE (115 aa)) constitute an MSS4 domain. Positions 23, 26, 94, and 97 each coordinate Zn(2+).

It belongs to the DSS4/MSS4 family. Interacts with RAB8A. As to expression, ubiquitous.

In terms of biological role, guanine-nucleotide-releasing protein that acts on members of the SEC4/YPT1/RAB subfamily. Stimulates GDP release from both YPT1, RAB3A and RAB10, but is less active on these proteins than on the SEC4 protein. Might play a general role in vesicular transport. The polypeptide is Guanine nucleotide exchange factor MSS4 (RABIF) (Homo sapiens (Human)).